A 143-amino-acid polypeptide reads, in one-letter code: Large ribosomal subunit protein uL11 (143 aa).

This sequence belongs to the universal ribosomal protein uL11 family. Part of the ribosomal stalk of the 50S ribosomal subunit. Interacts with L10 and the large rRNA to form the base of the stalk. L10 forms an elongated spine to which L12 dimers bind in a sequential fashion forming a multimeric L10(L12)X complex. Post-translationally, one or more lysine residues are methylated.

Functionally, forms part of the ribosomal stalk which helps the ribosome interact with GTP-bound translation factors. The polypeptide is Large ribosomal subunit protein uL11 (Pseudomonas syringae pv. tomato (strain ATCC BAA-871 / DC3000)).